The primary structure comprises 332 residues: Endo-1,4-beta-xylanase B (332 aa).

Positions 2–331 (STEIPSLSAS…KDSFWRIIGQ (330 aa)) constitute a GH10 domain. Catalysis depends on E134, which acts as the Proton donor. The active-site Nucleophile is E241.

Belongs to the glycosyl hydrolase 10 (cellulase F) family. Cytoplasmic xylanase subfamily.

Its subcellular location is the cytoplasm. It catalyses the reaction Endohydrolysis of (1-&gt;4)-beta-D-xylosidic linkages in xylans.. Its pathway is glycan degradation; xylan degradation. Its activity is regulated as follows. Completely inhibited by Ag(2+), Cu(2+), Hg(2+), Mn(2+), Pb(2+) and Sn(2+). Strongly inhibited by Fe(2+) and Zn(2+). Co(2+) and Ni(2+) cause little inhibition while Ca(2+) and Mg(2+) do not affect enzyme activity, and Ba(2+) produces a small stimulating effect. Irreversibly inactivated by SDS in vitro. Functionally, plays a role in plant xylan biodegradation, probably via the hydrolysis of short xylooligosaccharides resulting from extracellular xylan hydrolysis, once they have been transported inside cells. Shows similar activity on xylans of different rate of arabinose or methylglucuronic substitution. Also displays high activity on aryl-xylosides. Is active on xylotetraose and xylotriose, but does not hydrolyze xylobiose, indicating that XynB is a xylanase and not a beta-xylosidase. The polypeptide is Endo-1,4-beta-xylanase B (xynB) (Paenibacillus barcinonensis).